A 426-amino-acid polypeptide reads, in one-letter code: UDP-N-acetylglucosamine 1-carboxyvinyltransferase (426 aa).

A phosphoenolpyruvate-binding site is contributed by 22 to 23 (KN). Arg93 contributes to the UDP-N-acetyl-alpha-D-glucosamine binding site. Cys117 (proton donor) is an active-site residue. The residue at position 117 (Cys117) is a 2-(S-cysteinyl)pyruvic acid O-phosphothioketal. Residues 162–165 (KVSV), Asp307, and Ile329 each bind UDP-N-acetyl-alpha-D-glucosamine.

The protein belongs to the EPSP synthase family. MurA subfamily.

It localises to the cytoplasm. It carries out the reaction phosphoenolpyruvate + UDP-N-acetyl-alpha-D-glucosamine = UDP-N-acetyl-3-O-(1-carboxyvinyl)-alpha-D-glucosamine + phosphate. The protein operates within cell wall biogenesis; peptidoglycan biosynthesis. Its function is as follows. Cell wall formation. Adds enolpyruvyl to UDP-N-acetylglucosamine. This chain is UDP-N-acetylglucosamine 1-carboxyvinyltransferase, found in Haemophilus ducreyi (strain 35000HP / ATCC 700724).